Consider the following 425-residue polypeptide: Trigger factor (425 aa).

In terms of domain architecture, PPIase FKBP-type spans 163-248 (GDTAVIDFEG…VHEIKTKELP (86 aa)).

The protein belongs to the FKBP-type PPIase family. Tig subfamily.

It is found in the cytoplasm. It catalyses the reaction [protein]-peptidylproline (omega=180) = [protein]-peptidylproline (omega=0). Its function is as follows. Involved in protein export. Acts as a chaperone by maintaining the newly synthesized protein in an open conformation. Functions as a peptidyl-prolyl cis-trans isomerase. This is Trigger factor from Bacillus cereus (strain ATCC 10987 / NRS 248).